The chain runs to 338 residues: Glycerol-3-phosphate dehydrogenase [NAD(P)+] (338 aa).

NADPH-binding residues include Ser-14, Tyr-15, His-35, and Lys-109. Lys-109, Gly-138, and Thr-140 together coordinate sn-glycerol 3-phosphate. Ala-142 provides a ligand contact to NADPH. Residues Lys-194, Asp-247, Ser-257, Arg-258, and Asn-259 each contribute to the sn-glycerol 3-phosphate site. Lys-194 acts as the Proton acceptor in catalysis. Arg-258 provides a ligand contact to NADPH. Residues Val-282 and Glu-284 each contribute to the NADPH site.

The protein belongs to the NAD-dependent glycerol-3-phosphate dehydrogenase family.

The protein localises to the cytoplasm. The catalysed reaction is sn-glycerol 3-phosphate + NAD(+) = dihydroxyacetone phosphate + NADH + H(+). It catalyses the reaction sn-glycerol 3-phosphate + NADP(+) = dihydroxyacetone phosphate + NADPH + H(+). It participates in membrane lipid metabolism; glycerophospholipid metabolism. Catalyzes the reduction of the glycolytic intermediate dihydroxyacetone phosphate (DHAP) to sn-glycerol 3-phosphate (G3P), the key precursor for phospholipid synthesis. The chain is Glycerol-3-phosphate dehydrogenase [NAD(P)+] from Shewanella baltica (strain OS155 / ATCC BAA-1091).